The primary structure comprises 504 residues: Sugar transport protein 14 (504 aa).

The Cytoplasmic portion of the chain corresponds to 1–25 (MAGGALTDEGGLKRAHLYEHRITSY). Helical transmembrane passes span 26 to 46 (FIFA…DLGV), 84 to 104 (ILTL…FGAS), 121 to 141 (VSFF…MLIL), 144 to 164 (IFLG…LSEM), 171 to 191 (GTVN…ANLI), 205 to 225 (LSLG…LVLP), 286 to 308 (LVIG…ILFY), 315 to 337 (SLGF…LVVA), 352 to 372 (FLLL…GVTL), 382 to 402 (LPKS…LAYG), 428 to 448 (VVVC…LVSL), and 454 to 474 (GIFL…YFLL). The Cytoplasmic portion of the chain corresponds to 475–504 (PETKQVPIEEVYLLWRQHWLWKKYVEDVDE).

The protein belongs to the major facilitator superfamily. Sugar transporter (TC 2.A.1.1) family.

It localises to the membrane. Mediates an active uptake of hexoses, probably by sugar/hydrogen symport. The polypeptide is Sugar transport protein 14 (STP14) (Arabidopsis thaliana (Mouse-ear cress)).